Here is a 538-residue protein sequence, read N- to C-terminus: Nicotinate phosphoribosyltransferase (538 aa).

Residues Tyr-21 and Thr-210 each coordinate nicotinate. His-213 carries the phosphohistidine modification. Position 318 (Arg-318) interacts with nicotinate. Residue Thr-380 coordinates 5-phospho-alpha-D-ribose 1-diphosphate.

The protein belongs to the NAPRTase family. As to quaternary structure, homodimer. It depends on Mg(2+) as a cofactor. Requires Mn(2+) as cofactor. In terms of processing, transiently phosphorylated on a His residue during the reaction cycle. Phosphorylation strongly increases the affinity for substrates and increases the rate of nicotinate D-ribonucleotide production. Dephosphorylation regenerates the low-affinity form of the enzyme, leading to product release. As to expression, abundantly expressed in the small intestine, liver and kidney.

It localises to the cytoplasm. The protein resides in the cytosol. It catalyses the reaction nicotinate + 5-phospho-alpha-D-ribose 1-diphosphate + ATP + H2O = nicotinate beta-D-ribonucleotide + ADP + phosphate + diphosphate. It functions in the pathway cofactor biosynthesis; NAD(+) biosynthesis; nicotinate D-ribonucleotide from nicotinate: step 1/1. In terms of biological role, catalyzes the first step in the biosynthesis of NAD from nicotinic acid, the ATP-dependent synthesis of beta-nicotinate D-ribonucleotide from nicotinate and 5-phospho-D-ribose 1-phosphate. Helps prevent cellular oxidative stress via its role in NAD biosynthesis. The protein is Nicotinate phosphoribosyltransferase (Naprt) of Mus musculus (Mouse).